A 327-amino-acid chain; its full sequence is Movement protein (327 aa).

Positions serine 297–glutamate 327 form a coiled coil.

It belongs to the caulimoviridae movement protein family. Homotrimer, through the coiled-coil domain. Interacts with VAP. May interact (via N-terminus) with host prenylated Rab acceptor protein 1D (PRA1D).

It localises to the host cell junction. It is found in the host plasmodesma. Its function is as follows. Transports viral genome to neighboring plant cells directly through plasmosdesmata, without any budding. The movement protein allows efficient cell to cell propagation, by bypassing the host cell wall barrier. Acts by forming tubules structures that increase the size exclusion limit (SEL) of plasmodesmata, thereby allowing viral ribonucleocapsids to spread directly to neighboring cells. The chain is Movement protein from Cauliflower mosaic virus (strain W260) (CaMV).